A 667-amino-acid chain; its full sequence is Beta-galactosidase LacA (667 aa).

Residue R109 participates in substrate binding. C113 lines the Zn(2+) pocket. N147 lines the substrate pocket. The Proton donor role is filled by E148. 3 residues coordinate Zn(2+): C153, C155, and C158. Residue E307 is the Nucleophile of the active site. Residues W315 and E355–H358 each bind substrate.

This sequence belongs to the glycosyl hydrolase 42 family.

The enzyme catalyses Hydrolysis of terminal non-reducing beta-D-galactose residues in beta-D-galactosides.. Its function is as follows. Hydrolyzes lactose, oNP-galactoside (oNPG), pNP-galactosidase (pNPG), pNP-mannoside, pNP-glucoside, pNP-fucoside, pNP-N-acetylglucosamide, but not pNP-arabinoside or 4-methylumbelliferyl-beta-galactopyranoside (MUG). Transgalactosylates lactose at 10 g/L, but not at 270 g/L. The polypeptide is Beta-galactosidase LacA (Lactobacillus acidophilus).